The sequence spans 629 residues: (-)-alpha pinene synthase 1, chloroplastic (629 aa).

A chloroplast-targeting transit peptide spans 1-48 (MSPVSVISLPSDLCLPTSFIDRSGRELNPLHITIPNVAMRRQGKLMTR). Residues Asp380, Asp384, and Asp532 each contribute to the Mg(2+) site. A DDXXD motif motif is present at residues 380–384 (DDMYD).

Belongs to the terpene synthase family. Tpsd subfamily. The cofactor is Mg(2+). It depends on Mn(2+) as a cofactor.

It is found in the plastid. The protein localises to the chloroplast. It catalyses the reaction (2E)-geranyl diphosphate = (1S,5S)-alpha-pinene + diphosphate. The catalysed reaction is (2E)-geranyl diphosphate = (1S,5S)-beta-pinene + diphosphate. The protein operates within terpene metabolism; oleoresin biosynthesis. It functions in the pathway secondary metabolite biosynthesis; terpenoid biosynthesis. Functionally, monoterpene synthase (TPS) involved in the biosynthesis of monoterpene natural products included in conifer oleoresin secretions and volatile emissions; these compounds contribute to biotic and abiotic stress defense against herbivores and pathogens. Catalyzes the conversion of (2E)-geranyl diphosphate (GPP) to (-)-alpha-pinene and, to a lower extent, to (-)-beta-pinene. The polypeptide is (-)-alpha pinene synthase 1, chloroplastic (Pinus contorta (Shore pine)).